Here is a 342-residue protein sequence, read N- to C-terminus: Dihydroorotate dehydrogenase (quinone) (342 aa).

Residues 60–64 and Thr-84 each bind FMN; that span reads AGLDK. Residue Lys-64 participates in substrate binding. Substrate is bound at residue 109 to 113; sequence NRMGF. Residues Asn-137 and Asn-170 each coordinate FMN. Position 170 (Asn-170) interacts with substrate. Ser-173 acts as the Nucleophile in catalysis. Asn-175 contributes to the substrate binding site. Positions 215 and 243 each coordinate FMN. 244–245 lines the substrate pocket; the sequence is NT. FMN is bound by residues Gly-266, Gly-295, and 316 to 317; that span reads YS.

It belongs to the dihydroorotate dehydrogenase family. Type 2 subfamily. Monomer. It depends on FMN as a cofactor.

It localises to the cell membrane. It carries out the reaction (S)-dihydroorotate + a quinone = orotate + a quinol. It functions in the pathway pyrimidine metabolism; UMP biosynthesis via de novo pathway; orotate from (S)-dihydroorotate (quinone route): step 1/1. Its function is as follows. Catalyzes the conversion of dihydroorotate to orotate with quinone as electron acceptor. This Nitrosomonas eutropha (strain DSM 101675 / C91 / Nm57) protein is Dihydroorotate dehydrogenase (quinone).